We begin with the raw amino-acid sequence, 445 residues long: Histidinol dehydrogenase (445 aa).

NAD(+) is bound by residues Tyr136, Gln200, and Asn228. Substrate-binding residues include Thr251, Gln273, and His276. Zn(2+)-binding residues include Gln273 and His276. Catalysis depends on proton acceptor residues Glu342 and His343. The substrate site is built by His343, Asp376, Glu430, and His435. Asp376 provides a ligand contact to Zn(2+). Residue His435 coordinates Zn(2+).

Belongs to the histidinol dehydrogenase family. It depends on Zn(2+) as a cofactor.

It catalyses the reaction L-histidinol + 2 NAD(+) + H2O = L-histidine + 2 NADH + 3 H(+). It participates in amino-acid biosynthesis; L-histidine biosynthesis; L-histidine from 5-phospho-alpha-D-ribose 1-diphosphate: step 9/9. Its function is as follows. Catalyzes the sequential NAD-dependent oxidations of L-histidinol to L-histidinaldehyde and then to L-histidine. The polypeptide is Histidinol dehydrogenase (hisD) (Mycolicibacterium smegmatis (Mycobacterium smegmatis)).